The chain runs to 196 residues: RNA-binding protein with multiple splicing 2 (196 aa).

Residues 20–97 form the RRM domain; it reads RTLFVSGLPI…QTLRLEFAKA (78 aa). An important for homodimerization region spans residues 30 to 40; sequence DIKPRELYLLF.

Homodimer. Expressed in developing heart, pronephros, retina and epiphysis. In adult, high expression in heart, moderate in kidney, undetectable in liver, lung and skeletal muscle.

The protein resides in the cytoplasm. Its subcellular location is the nucleus. It localises to the stress granule. Its function is as follows. RNA-binding protein involved in the regulation of smooth muscle cell differentiation and proliferation in the gastrointestinal system. Binds NOG mRNA, the major inhibitor of the bone morphogenetic protein (BMP) pathway. Mediates an increase of NOG mRNA levels, thereby contributing to the negative regulation of BMP signaling pathway and promoting reversible dedifferentiation and proliferation of smooth muscle cells. Acts as a pre-mRNA alternative splicing regulator. Mediates ACTN1 and FLNB alternative splicing. Likely binds to mRNA tandem CAC trinucleotide or CA dinucleotide motifs. In Xenopus laevis (African clawed frog), this protein is RNA-binding protein with multiple splicing 2.